Consider the following 346-residue polypeptide: Haptoglobin (346 aa).

Positions 1–18 (MRALGAVVTLLLWGQLFA) are cleaved as a signal peptide. Positions 31 to 87 (DSCPKPPEIENGYVEHLVRYRCQHYRLRTEGDGVYTLNSEKQWVNTAAGERLPECEA) constitute a Sushi domain. 4 disulfide bridges follow: Cys52–Cys85, Cys89–Cys206, Cys249–Cys280, and Cys291–Cys321. Positions 102–344 (IIGGSLDAKG…FLDWIQETMA (243 aa)) constitute a Peptidase S1 domain. N-linked (GlcNAc...) asparagine glycans are attached at residues Asn147 and Asn181. The tract at residues 258–263 (VPEKEG) is interaction with CD163.

Belongs to the peptidase S1 family. Tetramer of two alpha and two beta chains; disulfide-linked. The hemoglobin/haptoglobin complex is composed of a haptoglobin dimer bound to two hemoglobin alpha-beta dimers. Interacts with CD163. Interacts with ERGIC3. In terms of tissue distribution, expressed by the liver and secreted in plasma.

The protein resides in the secreted. Functionally, as a result of hemolysis, hemoglobin is found to accumulate in the kidney and is secreted in the urine. Haptoglobin captures, and combines with free plasma hemoglobin to allow hepatic recycling of heme iron and to prevent kidney damage. Haptoglobin also acts as an antioxidant, has antibacterial activity and plays a role in modulating many aspects of the acute phase response. Hemoglobin/haptoglobin complexes are rapidly cleared by the macrophage CD163 scavenger receptor expressed on the surface of liver Kupfer cells through an endocytic lysosomal degradation pathway. This chain is Haptoglobin (HP), found in Mesocricetus auratus (Golden hamster).